A 127-amino-acid polypeptide reads, in one-letter code: Large ribosomal subunit protein bL20 (127 aa).

The protein belongs to the bacterial ribosomal protein bL20 family.

Functionally, binds directly to 23S ribosomal RNA and is necessary for the in vitro assembly process of the 50S ribosomal subunit. It is not involved in the protein synthesizing functions of that subunit. The sequence is that of Large ribosomal subunit protein bL20 from Bifidobacterium longum (strain DJO10A).